A 90-amino-acid polypeptide reads, in one-letter code: Probable Fe(2+)-trafficking protein (90 aa).

This sequence belongs to the Fe(2+)-trafficking protein family.

In terms of biological role, could be a mediator in iron transactions between iron acquisition and iron-requiring processes, such as synthesis and/or repair of Fe-S clusters in biosynthetic enzymes. The chain is Probable Fe(2+)-trafficking protein from Dechloromonas aromatica (strain RCB).